A 25-amino-acid polypeptide reads, in one-letter code: Caerin-2.4 (25 aa).

As to expression, expressed by the skin parotoid and/or rostral glands.

It is found in the secreted. In terms of biological role, antibacterial peptide, that adopts an alpha helical conformation which can disrupt bacterial membranes. Each caerin displays a different antimicrobial specificity. In Ranoidea caerulea (Green tree frog), this protein is Caerin-2.4.